A 215-amino-acid chain; its full sequence is 3-isopropylmalate dehydratase small subunit (215 aa).

It belongs to the LeuD family. LeuD type 1 subfamily. As to quaternary structure, heterodimer of LeuC and LeuD.

It catalyses the reaction (2R,3S)-3-isopropylmalate = (2S)-2-isopropylmalate. Its pathway is amino-acid biosynthesis; L-leucine biosynthesis; L-leucine from 3-methyl-2-oxobutanoate: step 2/4. Catalyzes the isomerization between 2-isopropylmalate and 3-isopropylmalate, via the formation of 2-isopropylmaleate. This Polynucleobacter necessarius subsp. necessarius (strain STIR1) protein is 3-isopropylmalate dehydratase small subunit.